A 69-amino-acid chain; its full sequence is U5-agatoxin-Ao1a (69 aa).

The first 20 residues, 1-20 (MRTIISLLLLSAMVFAVIEA), serve as a signal peptide directing secretion. The propeptide occupies 21-34 (ISLEEGLQLFEGER). 2 disulfide bridges follow: C36–C52 and C43–C57.

It belongs to the neurotoxin 01 (U2-agtx) family. Post-translationally, does not contain a cysteine at position 61 which disrupts the cysteine framework. In terms of tissue distribution, expressed by the venom gland.

Its subcellular location is the secreted. This Agelena orientalis (Funnel-web spider) protein is U5-agatoxin-Ao1a.